The chain runs to 429 residues: Enolase 2 (429 aa).

Position 163 (Gln163) interacts with (2R)-2-phosphoglycerate. Glu205 functions as the Proton donor in the catalytic mechanism. Residues Asp242, Glu286, and Asp313 each coordinate Mg(2+). Positions 338, 367, 368, and 389 each coordinate (2R)-2-phosphoglycerate. The active-site Proton acceptor is Lys338.

Belongs to the enolase family. Mg(2+) is required as a cofactor.

The protein resides in the cytoplasm. It localises to the secreted. Its subcellular location is the cell surface. The catalysed reaction is (2R)-2-phosphoglycerate = phosphoenolpyruvate + H2O. Its pathway is carbohydrate degradation; glycolysis; pyruvate from D-glyceraldehyde 3-phosphate: step 4/5. Its function is as follows. Catalyzes the reversible conversion of 2-phosphoglycerate (2-PG) into phosphoenolpyruvate (PEP). It is essential for the degradation of carbohydrates via glycolysis. This chain is Enolase 2, found in Lactiplantibacillus plantarum (strain ATCC BAA-793 / NCIMB 8826 / WCFS1) (Lactobacillus plantarum).